The following is a 324-amino-acid chain: ATP-dependent 6-phosphofructokinase (324 aa).

Residue Gly-11 participates in ATP binding. Arg-21–Arg-25 serves as a coordination point for ADP. Residues Arg-72–Glu-73 and Gly-102–Ser-105 contribute to the ATP site. Asn-103 is a binding site for Mg(2+). Thr-126–Asp-128 contacts substrate. Asp-128 (proton acceptor) is an active-site residue. Position 155 (Lys-155) interacts with ADP. Substrate contacts are provided by residues Arg-163 and Met-170–Arg-172. Residues Gly-186 to Glu-188 and Lys-214 to Phe-216 each bind ADP. Residues Glu-223, Arg-248, and Tyr-254–Arg-257 contribute to the substrate site.

Belongs to the phosphofructokinase type A (PFKA) family. ATP-dependent PFK group I subfamily. Prokaryotic clade 'B1' sub-subfamily. Homotetramer. Mg(2+) is required as a cofactor.

The protein localises to the cytoplasm. It carries out the reaction beta-D-fructose 6-phosphate + ATP = beta-D-fructose 1,6-bisphosphate + ADP + H(+). It participates in carbohydrate degradation; glycolysis; D-glyceraldehyde 3-phosphate and glycerone phosphate from D-glucose: step 3/4. With respect to regulation, allosterically activated by ADP and other diphosphonucleosides, and allosterically inhibited by phosphoenolpyruvate. Its function is as follows. Catalyzes the phosphorylation of D-fructose 6-phosphate to fructose 1,6-bisphosphate by ATP, the first committing step of glycolysis. The polypeptide is ATP-dependent 6-phosphofructokinase (Sulfurihydrogenibium sp. (strain YO3AOP1)).